The primary structure comprises 84 residues: Tenecin-1 (84 aa).

Residues Met-1–Ala-19 form the signal peptide. Residues Phe-20 to Arg-41 constitute a propeptide that is removed on maturation. 3 disulfides stabilise this stretch: Cys-44-Cys-75, Cys-61-Cys-81, and Cys-65-Cys-83.

The protein belongs to the invertebrate defensin family. Type 1 subfamily.

The protein resides in the secreted. In terms of biological role, bactericidal protein produced in response to injury. It is cytotoxic to Gram-positive bacteria. This Tenebrio molitor (Yellow mealworm beetle) protein is Tenecin-1.